A 402-amino-acid polypeptide reads, in one-letter code: 1-deoxy-D-xylulose 5-phosphate reductoisomerase (402 aa).

The NADPH site is built by Thr-10, Gly-11, Ser-12, Ile-13, Asn-38, and Asn-124. Lys-125 contacts 1-deoxy-D-xylulose 5-phosphate. Glu-126 serves as a coordination point for NADPH. Asp-150 contacts Mn(2+). Positions 151, 152, 186, and 209 each coordinate 1-deoxy-D-xylulose 5-phosphate. Glu-152 serves as a coordination point for Mn(2+). Residue Gly-215 participates in NADPH binding. Ser-222, Asn-227, Lys-228, and Glu-231 together coordinate 1-deoxy-D-xylulose 5-phosphate. Residue Glu-231 participates in Mn(2+) binding.

This sequence belongs to the DXR family. Mg(2+) serves as cofactor. Mn(2+) is required as a cofactor.

The catalysed reaction is 2-C-methyl-D-erythritol 4-phosphate + NADP(+) = 1-deoxy-D-xylulose 5-phosphate + NADPH + H(+). It participates in isoprenoid biosynthesis; isopentenyl diphosphate biosynthesis via DXP pathway; isopentenyl diphosphate from 1-deoxy-D-xylulose 5-phosphate: step 1/6. Functionally, catalyzes the NADPH-dependent rearrangement and reduction of 1-deoxy-D-xylulose-5-phosphate (DXP) to 2-C-methyl-D-erythritol 4-phosphate (MEP). This Vibrio vulnificus (strain CMCP6) protein is 1-deoxy-D-xylulose 5-phosphate reductoisomerase.